A 222-amino-acid polypeptide reads, in one-letter code: Large ribosomal subunit protein uL4 (222 aa).

The tract at residues 67–87 (QKGTGNARAGSKRTNVRRGGG) is disordered.

It belongs to the universal ribosomal protein uL4 family. As to quaternary structure, part of the 50S ribosomal subunit.

Functionally, one of the primary rRNA binding proteins, this protein initially binds near the 5'-end of the 23S rRNA. It is important during the early stages of 50S assembly. It makes multiple contacts with different domains of the 23S rRNA in the assembled 50S subunit and ribosome. Its function is as follows. Forms part of the polypeptide exit tunnel. The sequence is that of Large ribosomal subunit protein uL4 from Rhodopirellula baltica (strain DSM 10527 / NCIMB 13988 / SH1).